The chain runs to 174 residues: Gamma-crystallin A (174 aa).

Beta/gamma crystallin 'Greek key' domains lie at 2–40 (GKIT…RVDS) and 41–83 (GCWM…RSIP). Positions 84 to 87 (YTSS) are connecting peptide. Beta/gamma crystallin 'Greek key' domains are found at residues 88–128 (HRIR…HVLE) and 129–171 (GCWV…RRVM).

This sequence belongs to the beta/gamma-crystallin family.

Crystallins are the dominant structural components of the vertebrate eye lens. The protein is Gamma-crystallin A (Cryga) of Mus musculus (Mouse).